Consider the following 124-residue polypeptide: Large ribosomal subunit protein bL12 (124 aa).

Belongs to the bacterial ribosomal protein bL12 family. As to quaternary structure, homodimer. Part of the ribosomal stalk of the 50S ribosomal subunit. Forms a multimeric L10(L12)X complex, where L10 forms an elongated spine to which 2 to 4 L12 dimers bind in a sequential fashion. Binds GTP-bound translation factors.

Its function is as follows. Forms part of the ribosomal stalk which helps the ribosome interact with GTP-bound translation factors. Is thus essential for accurate translation. The protein is Large ribosomal subunit protein bL12 of Cupriavidus metallidurans (strain ATCC 43123 / DSM 2839 / NBRC 102507 / CH34) (Ralstonia metallidurans).